The sequence spans 322 residues: Pantothenate kinase (322 aa).

100–107 lines the ATP pocket; it reads GSVAVGKS.

This sequence belongs to the prokaryotic pantothenate kinase family.

The protein localises to the cytoplasm. It catalyses the reaction (R)-pantothenate + ATP = (R)-4'-phosphopantothenate + ADP + H(+). Its pathway is cofactor biosynthesis; coenzyme A biosynthesis; CoA from (R)-pantothenate: step 1/5. In Brucella abortus (strain 2308), this protein is Pantothenate kinase.